The primary structure comprises 451 residues: uncharacterized protein (451 aa).

A run of 11 helical transmembrane segments spans residues 13 to 33 (IGFV…WKFP), 41 to 61 (GGAF…PLLV), 97 to 117 (ACFL…LYIV), 142 to 162 (NPVQ…LVVA), 174 to 194 (AVMM…SLTL), 217 to 237 (ILFA…VMVT), 255 to 275 (IVLM…PAVF), 299 to 319 (LPFG…AALT), 345 to 365 (WTSG…YGVL), 381 to 401 (FTVS…FIPL), and 429 to 449 (LLRF…IGIL).

Belongs to the sodium:neurotransmitter symporter (SNF) (TC 2.A.22) family.

It is found in the cell membrane. Putative sodium-dependent transporter. This is an uncharacterized protein from Bacillus subtilis (strain 168).